The following is a 91-amino-acid chain: Acylphosphatase (91 aa).

Residues 3–91 form the Acylphosphatase-like domain; sequence KLRMNVQGRV…EETEQFKVIQ (89 aa). Catalysis depends on residues Arg-18 and Asn-36.

It belongs to the acylphosphatase family.

The catalysed reaction is an acyl phosphate + H2O = a carboxylate + phosphate + H(+). This chain is Acylphosphatase (acyP), found in Enterococcus faecalis (strain ATCC 700802 / V583).